The primary structure comprises 477 residues: MAKEKGLTPQSQDFSEWYLEVIQKAELADYGPVRGTIVVRPYGYAIWENIQQVLDRMFKETGHQNAYFPLFIPMSFLRKEAEHVEGFSPELAVVTHAGGEELEEPLAVRPTSETVIGYMWSKWIRSWRDLPQLLNQWGNVVRWEMRTRPFLRTSEFLWQEGHTAHATREEAEEEVRRMLSIYARLAREYAAIPVIEGLKTEKEKFAGAVYTTTIEALMKDGKALQAGTSHYLGENFARAFDIKFQDRDLQVKYVHTTSWGLSWRFIGAIIMTHGDDRGLVLPPRLAPIQVVIVPIYKDESRERVLEAAQGLRQALLAQGLRVHLDDRDQHTPGYKFHEWELKGVPFRVELGPKDLEGGQAVLASRLGGKETLPLAALPEALPGKLDAFHEELYRRALAFREDHTRKVDTYEAFKEAVQEGFALAFHCGDKACERLIQEETTATTRCVPFEAEPEEGFCVRCGRPSAYGKRVVFAKAY.

Positions 111, 113, and 142 each coordinate L-proline. 4 residues coordinate ATP: R142, T153, Q225, and T228. H230 is a binding site for L-proline. S262 and R264 together coordinate ATP. An interaction with tRNA region spans residues 340–369 (ELKGVPFRVELGPKDLEGGQAVLASRLGGK). The Zn(2+) site is built by C427, C432, C458, and C461.

Belongs to the class-II aminoacyl-tRNA synthetase family. ProS type 3 subfamily. As to quaternary structure, homodimer. Only one tRNA molecule binds per dimer.

The protein resides in the cytoplasm. It carries out the reaction tRNA(Pro) + L-proline + ATP = L-prolyl-tRNA(Pro) + AMP + diphosphate. Its function is as follows. Catalyzes the attachment of proline to tRNA(Pro) in a two-step reaction: proline is first activated by ATP to form Pro-AMP and then transferred to the acceptor end of tRNA(Pro). Can inadvertently accommodate and process cysteine. In Thermus thermophilus (strain ATCC 27634 / DSM 579 / HB8), this protein is Proline--tRNA ligase (proS).